A 251-amino-acid polypeptide reads, in one-letter code: 3-deoxy-manno-octulosonate cytidylyltransferase (251 aa).

It belongs to the KdsB family.

It localises to the cytoplasm. The enzyme catalyses 3-deoxy-alpha-D-manno-oct-2-ulosonate + CTP = CMP-3-deoxy-beta-D-manno-octulosonate + diphosphate. The protein operates within nucleotide-sugar biosynthesis; CMP-3-deoxy-D-manno-octulosonate biosynthesis; CMP-3-deoxy-D-manno-octulosonate from 3-deoxy-D-manno-octulosonate and CTP: step 1/1. Its pathway is bacterial outer membrane biogenesis; lipopolysaccharide biosynthesis. Functionally, activates KDO (a required 8-carbon sugar) for incorporation into bacterial lipopolysaccharide in Gram-negative bacteria. The polypeptide is 3-deoxy-manno-octulosonate cytidylyltransferase (Rhizobium johnstonii (strain DSM 114642 / LMG 32736 / 3841) (Rhizobium leguminosarum bv. viciae)).